Reading from the N-terminus, the 155-residue chain is Plastocyanin, chloroplastic (155 aa).

The transit peptide at 1 to 58 (MAALSSAAVSVPSFAAATPMRSSRSSRMVVRASLGKKAASAAVAMAAGAMLLGGSAMA) directs the protein to the chloroplast. The Plastocyanin-like domain occupies 59–155 (QDVLLGANGG…AGMVGKVTVN (97 aa)). H95, C140, H143, and M148 together coordinate Cu cation.

This sequence belongs to the plastocyanin family. Cu(2+) is required as a cofactor.

The protein localises to the plastid. The protein resides in the chloroplast thylakoid membrane. Its function is as follows. Participates in electron transfer between P700 and the cytochrome b6-f complex in photosystem I. This Hordeum vulgare (Barley) protein is Plastocyanin, chloroplastic (PETE).